A 425-amino-acid chain; its full sequence is Neuromedin-U receptor 1 (425 aa).

Over 1–59 (MTPPCLNCSFFPGQLSPNASTGLLSCNDSEFKEHFDLEDLNLTHEDLRLKYLGPQQVKQ) the chain is Extracellular. The N-linked (GlcNAc...) asparagine glycan is linked to Asn-41. The helical transmembrane segment at 60–80 (FLPICVTYLLIFVVGTLGNGL) threads the bilayer. Over 81–96 (TCTVILRQKAMHTPTN) the chain is Cytoplasmic. The helical transmembrane segment at 97 to 117 (FYLFSLAVSDLLVLLVGLPLE) threads the bilayer. The Extracellular portion of the chain corresponds to 118-137 (LYEMQHNYPFQLGAGGCYFR). Cys-134 and Cys-219 form a disulfide bridge. Residues 138–158 (ILLLETVCLASVLNVTALSVE) traverse the membrane as a helical segment. Residues 159 to 181 (RYVAVVHPLQAKSVMTRTHVRRM) lie on the Cytoplasmic side of the membrane. A helical transmembrane segment spans residues 182 to 202 (LGAIWVFAILFSLPNTSLHGL). The Extracellular segment spans residues 203-235 (SPLYVPCRGPVPDSVTCTLVRPQFFYKLVIQTT). A helical membrane pass occupies residues 236 to 256 (ILLFFCLPMVTISVLYLLIGL). Topologically, residues 257 to 294 (RLRRERILLQEEVKGRISAAARQASHRSIQLRDRERRQ) are cytoplasmic. The chain crosses the membrane as a helical span at residues 295–315 (VTKMLIALVIVFGTCWVPFHA). Over 316–331 (DRLMWSMVSHWTDGLR) the chain is Extracellular. The helical transmembrane segment at 332–352 (LAFQSVHLASGVFLYLGSAAN) threads the bilayer. Topologically, residues 353–425 (PVLYNLMSTR…GCEQETDPPE (73 aa)) are cytoplasmic. Residues 406 to 425 (DVPLAENRDPGCEQETDPPE) are disordered.

This sequence belongs to the G-protein coupled receptor 1 family. As to expression, highly expressed in the small intestine and lung. Low expression in the central nervous system.

The protein resides in the cell membrane. Its function is as follows. Receptor for the neuromedin-U and neuromedin-S neuropeptides. In Rattus norvegicus (Rat), this protein is Neuromedin-U receptor 1 (Nmur1).